The chain runs to 227 residues: Small ribosomal subunit protein uS3 (227 aa).

In terms of domain architecture, KH type-2 spans 38–106; sequence LRKYLREKLA…EVHLNIVEIR (69 aa).

The protein belongs to the universal ribosomal protein uS3 family. In terms of assembly, part of the 30S ribosomal subunit. Forms a tight complex with proteins S10 and S14.

Functionally, binds the lower part of the 30S subunit head. Binds mRNA in the 70S ribosome, positioning it for translation. The protein is Small ribosomal subunit protein uS3 of Paramagnetospirillum magneticum (strain ATCC 700264 / AMB-1) (Magnetospirillum magneticum).